Consider the following 190-residue polypeptide: Threonylcarbamoyl-AMP synthase (190 aa).

Residues Gly-7 to Gly-190 enclose the YrdC-like domain.

Belongs to the SUA5 family. TsaC subfamily.

The protein localises to the cytoplasm. It catalyses the reaction L-threonine + hydrogencarbonate + ATP = L-threonylcarbamoyladenylate + diphosphate + H2O. Its function is as follows. Required for the formation of a threonylcarbamoyl group on adenosine at position 37 (t(6)A37) in tRNAs that read codons beginning with adenine. Catalyzes the conversion of L-threonine, HCO(3)(-)/CO(2) and ATP to give threonylcarbamoyl-AMP (TC-AMP) as the acyladenylate intermediate, with the release of diphosphate. This is Threonylcarbamoyl-AMP synthase from Shigella flexneri.